A 126-amino-acid polypeptide reads, in one-letter code: CD59 glycoprotein (126 aa).

The first 25 residues, 1-25 (MGIQGGSVLFGLLLALAVFCHSGHS), serve as a signal peptide directing secretion. The 81-residue stretch at 26–106 (LQCYNCPNPT…QLENGGTSLS (81 aa)) folds into the UPAR/Ly6 domain. 5 disulfides stabilise this stretch: cysteine 28/cysteine 51, cysteine 31/cysteine 38, cysteine 44/cysteine 64, cysteine 70/cysteine 88, and cysteine 89/cysteine 94. N-linked (GlcNAc...) asparagine glycosylation occurs at asparagine 43. Residue asparagine 100 is the site of GPI-anchor amidated asparagine attachment. The propeptide at 101-126 (GGTSLSEKTVLLLVTPLLAAAWCLHP) is removed in mature form.

As to quaternary structure, interacts with T-cell surface antigen CD2. In terms of processing, N- and O-glycosylated.

Its subcellular location is the cell membrane. It localises to the secreted. Its function is as follows. Potent inhibitor of the complement membrane attack complex (MAC) action, which protects self-cells from damage during complement activation. Acts by binding to the beta-haipins of C8 (C8A and C8B) components of the assembling MAC, forming an intermolecular beta-sheet that prevents incorporation of the multiple copies of C9 required for complete formation of the osmolytic pore. In Papio sp. (Baboon), this protein is CD59 glycoprotein.